Consider the following 375-residue polypeptide: Chaperone protein DnaJ (375 aa).

Residues Asp-5–Gly-70 form the J domain. The CR-type zinc-finger motif lies at Gly-136–Ile-214. Zn(2+) contacts are provided by Cys-149, Cys-152, Cys-166, Cys-169, Cys-188, Cys-191, Cys-202, and Cys-205. CXXCXGXG motif repeat units lie at residues Cys-149–Gly-156, Cys-166–Gly-173, Cys-188–Gly-195, and Cys-202–Gly-209.

Belongs to the DnaJ family. Homodimer. Requires Zn(2+) as cofactor.

It localises to the cytoplasm. Functionally, participates actively in the response to hyperosmotic and heat shock by preventing the aggregation of stress-denatured proteins and by disaggregating proteins, also in an autonomous, DnaK-independent fashion. Unfolded proteins bind initially to DnaJ; upon interaction with the DnaJ-bound protein, DnaK hydrolyzes its bound ATP, resulting in the formation of a stable complex. GrpE releases ADP from DnaK; ATP binding to DnaK triggers the release of the substrate protein, thus completing the reaction cycle. Several rounds of ATP-dependent interactions between DnaJ, DnaK and GrpE are required for fully efficient folding. Also involved, together with DnaK and GrpE, in the DNA replication of plasmids through activation of initiation proteins. This chain is Chaperone protein DnaJ, found in Oleidesulfovibrio alaskensis (strain ATCC BAA-1058 / DSM 17464 / G20) (Desulfovibrio alaskensis).